Reading from the N-terminus, the 21-residue chain is Fibrinogen beta chain (21 aa).

The span at 1-11 (EFPTDYDEGED) shows a compositional bias: acidic residues. The disordered stretch occupies residues 1–21 (EFPTDYDEGEDDRPKVGLGAR). Sulfotyrosine is present on Y6.

Heterohexamer; disulfide linked. Contains 2 sets of 3 non-identical chains (alpha, beta and gamma). The 2 heterotrimers are in head to head conformation with the N-termini in a small central domain. In terms of processing, conversion of fibrinogen to fibrin is triggered by thrombin, which cleaves fibrinopeptides A and B from alpha and beta chains, and thus exposes the N-terminal polymerization sites responsible for the formation of the soft clot.

It is found in the secreted. Cleaved by the protease thrombin to yield monomers which, together with fibrinogen alpha (FGA) and fibrinogen gamma (FGG), polymerize to form an insoluble fibrin matrix. Fibrin has a major function in hemostasis as one of the primary components of blood clots. In addition, functions during the early stages of wound repair to stabilize the lesion and guide cell migration during re-epithelialization. Was originally thought to be essential for platelet aggregation, based on in vitro studies using anticoagulated blood. However subsequent studies have shown that it is not absolutely required for thrombus formation in vivo. Enhances expression of SELP in activated platelets. Maternal fibrinogen is essential for successful pregnancy. Fibrin deposition is also associated with infection, where it protects against IFNG-mediated hemorrhage. May also facilitate the antibacterial immune response via both innate and T-cell mediated pathways. The chain is Fibrinogen beta chain (FGB) from Bison bonasus (European bison).